The primary structure comprises 233 residues: Glyceraldehyde 3-phosphate phosphatase (233 aa).

It belongs to the HAD-like hydrolase superfamily. Mg(2+) serves as cofactor.

In terms of biological role, catalyzes the dephosphorylation of D,L-glyceraldehyde 3-phosphate in vitro. This is Glyceraldehyde 3-phosphate phosphatase from Methanopyrus kandleri (strain AV19 / DSM 6324 / JCM 9639 / NBRC 100938).